A 300-amino-acid chain; its full sequence is Tyrosine recombinase XerC (300 aa).

The region spanning 2-88 (IQEGKLEQQF…SLRSFYTFLL (87 aa)) is the Core-binding (CB) domain. The Tyr recombinase domain occupies 109-294 (RLPKFFYSEE…TKEHLKSTYM (186 aa)). Active-site residues include Arg150, Lys174, His246, Arg249, and His272. Tyr281 serves as the catalytic O-(3'-phospho-DNA)-tyrosine intermediate.

Belongs to the 'phage' integrase family. XerC subfamily. Forms a cyclic heterotetrameric complex composed of two molecules of XerC and two molecules of XerD.

It localises to the cytoplasm. Its function is as follows. Site-specific tyrosine recombinase, which acts by catalyzing the cutting and rejoining of the recombining DNA molecules. The XerC-XerD complex is essential to convert dimers of the bacterial chromosome into monomers to permit their segregation at cell division. It also contributes to the segregational stability of plasmids. The sequence is that of Tyrosine recombinase XerC from Listeria monocytogenes serotype 4b (strain F2365).